The sequence spans 264 residues: tRNA pseudouridine synthase A (264 aa).

The active-site Nucleophile is the aspartate 51. Residue tyrosine 109 participates in substrate binding.

The protein belongs to the tRNA pseudouridine synthase TruA family. In terms of assembly, homodimer.

The enzyme catalyses uridine(38/39/40) in tRNA = pseudouridine(38/39/40) in tRNA. Functionally, formation of pseudouridine at positions 38, 39 and 40 in the anticodon stem and loop of transfer RNAs. The sequence is that of tRNA pseudouridine synthase A from Staphylococcus aureus (strain MRSA252).